Reading from the N-terminus, the 250-residue chain is Pyrroloquinoline-quinone synthase (250 aa).

This sequence belongs to the PqqC family.

The catalysed reaction is 6-(2-amino-2-carboxyethyl)-7,8-dioxo-1,2,3,4,7,8-hexahydroquinoline-2,4-dicarboxylate + 3 O2 = pyrroloquinoline quinone + 2 H2O2 + 2 H2O + H(+). Its pathway is cofactor biosynthesis; pyrroloquinoline quinone biosynthesis. Functionally, ring cyclization and eight-electron oxidation of 3a-(2-amino-2-carboxyethyl)-4,5-dioxo-4,5,6,7,8,9-hexahydroquinoline-7,9-dicarboxylic-acid to PQQ. The protein is Pyrroloquinoline-quinone synthase of Xanthomonas euvesicatoria pv. vesicatoria (strain 85-10) (Xanthomonas campestris pv. vesicatoria).